We begin with the raw amino-acid sequence, 420 residues long: Nucleobindin-2 (420 aa).

Residues 1–24 form the signal peptide; the sequence is MRWRTILLQYCFLLITCLLTALEA. Residues 171–223 mediate DNA binding; it reads KTRHEEFKKYEMMKEHERREYLKTLNEEKRKEEESKFEEMKKKHENHPKVNHP. A compositionally biased stretch (basic and acidic residues) spans 195–212; sequence LNEEKRKEEESKFEEMKK. A disordered region spans residues 195–225; it reads LNEEKRKEEESKFEEMKKKHENHPKVNHPGS. The binds to necdin stretch occupies residues 213–420; that stretch reads KHENHPKVNH…AGELKFEPHI (208 aa). EF-hand domains are found at residues 241-276 and 293-328; these read PNDFDPKTFFKLHDVNSDGFLDEQELEALFTKELEK and ERLRMREHVMNEVDTNKDRLVTLEEFLKATEKKEFL. Ca(2+) is bound by residues D254 and N256. Position 257 is a phosphoserine (S257). The Ca(2+) site is built by D258, E265, D306, N308, D310, and E317. The GBA motif lies at 304-334; the sequence is EVDTNKDRLVTLEEFLKATEKKEFLEPDSWE. A Phosphoserine modification is found at S332. Positions 398-420 are disordered; sequence QKKLQQGIPPSGPAGELKFEPHI.

Belongs to the nucleobindin family. Interacts (via GBA motif) with guanine nucleotide-binding protein G(i) alpha subunit GNAI3. Preferentially interacts with inactive rather than active GNAI3. Interaction with GNAI3 is inhibited when NUCB2 binds calcium, probably due to a conformational change which renders the GBA motif inaccessible. Binds to the postmitotic growth suppressor NDN; coexpression abolishes NUCB2 secretion. Interacts with MC4R. In terms of tissue distribution, predominantly expressed in spleen, testis and normal stomach.

Its subcellular location is the golgi apparatus. The protein resides in the membrane. The protein localises to the cytoplasm. It localises to the secreted. It is found in the endoplasmic reticulum. Its subcellular location is the nucleus envelope. Functionally, calcium-binding protein which may have a role in calcium homeostasis. Acts as a non-receptor guanine nucleotide exchange factor which binds to and activates guanine nucleotide-binding protein (G-protein) alpha subunit GNAI3. In terms of biological role, anorexigenic peptide, seems to play an important role in hypothalamic pathways regulating food intake and energy homeostasis, acting in a leptin-independent manner. May also exert hypertensive roles and modulate blood pressure through directly acting on peripheral arterial resistance. In intestinal epithelial cells, plays a role in the inhibition of hepatic glucose production via MC4R receptor leading to increased cyclic adenosine monophosphate (cAMP) levels and glucagon-like peptide 1 (GLP-1) secretion. This Homo sapiens (Human) protein is Nucleobindin-2.